Here is a 237-residue protein sequence, read N- to C-terminus: Probable 2-phosphosulfolactate phosphatase (237 aa).

It belongs to the ComB family. The cofactor is Mg(2+).

It carries out the reaction (2R)-O-phospho-3-sulfolactate + H2O = (2R)-3-sulfolactate + phosphate. The chain is Probable 2-phosphosulfolactate phosphatase from Thermus thermophilus (strain ATCC 27634 / DSM 579 / HB8).